A 906-amino-acid polypeptide reads, in one-letter code: Protein translocase subunit SecA (906 aa).

ATP contacts are provided by residues Q87, 105-109 (GEGKT), and D507. C890, C892, C901, and H902 together coordinate Zn(2+).

It belongs to the SecA family. Monomer and homodimer. Part of the essential Sec protein translocation apparatus which comprises SecA, SecYEG and auxiliary proteins SecDF-YajC and YidC. The cofactor is Zn(2+).

The protein resides in the cell inner membrane. It localises to the cytoplasm. The enzyme catalyses ATP + H2O + cellular proteinSide 1 = ADP + phosphate + cellular proteinSide 2.. Part of the Sec protein translocase complex. Interacts with the SecYEG preprotein conducting channel. Has a central role in coupling the hydrolysis of ATP to the transfer of proteins into and across the cell membrane, serving both as a receptor for the preprotein-SecB complex and as an ATP-driven molecular motor driving the stepwise translocation of polypeptide chains across the membrane. The protein is Protein translocase subunit SecA of Laribacter hongkongensis (strain HLHK9).